The chain runs to 330 residues: tRNA pseudouridine synthase B (330 aa).

The active-site Nucleophile is the D42.

Belongs to the pseudouridine synthase TruB family. Type 1 subfamily.

It catalyses the reaction uridine(55) in tRNA = pseudouridine(55) in tRNA. Its function is as follows. Responsible for synthesis of pseudouridine from uracil-55 in the psi GC loop of transfer RNAs. The polypeptide is tRNA pseudouridine synthase B (Lactococcus lactis subsp. cremoris (strain MG1363)).